Reading from the N-terminus, the 1000-residue chain is C2 domain-containing protein 5 (1000 aa).

The 109-residue stretch at Met-1–Phe-109 folds into the C2 domain. 6 residues coordinate Ca(2+): Asp-19, Asp-26, Asp-76, Asp-78, Ser-81, and Asp-84. Ser-197 is subject to Phosphoserine; by PKB/AKT2. Residues Ser-200 and Ser-260 each carry the phosphoserine modification. The tract at residues Met-265–Pro-330 is disordered. Positions Pro-274 to Asn-289 are enriched in polar residues. Residues Gln-290 to Gly-318 show a composition bias toward low complexity. 5 positions are modified to phosphoserine: Ser-293, Ser-295, Ser-304, Ser-305, and Ser-306. Phosphothreonine is present on Thr-317. Positions Met-319–Gly-328 are enriched in gly residues. A Phosphoserine modification is found at Ser-323. Thr-601 is modified (phosphothreonine). Positions Glu-639–Asp-669 are disordered. 5 positions are modified to phosphoserine: Ser-643, Ser-657, Ser-659, Ser-661, and Ser-662. Thr-666 carries the phosphothreonine modification. Ser-671 bears the Phosphoserine mark. Position 807 is a phosphothreonine (Thr-807). Phosphoserine occurs at positions 817 and 852.

Ca(2+) is required as a cofactor. Phosphorylated on Ser-197 by active myristoylated kinase AKT2; insulin-stimulated phosphorylation by AKT2 regulates SLC2A4/GLUT4 translocation into the plasma membrane.

It is found in the cytoplasmic vesicle membrane. The protein resides in the cytoplasm. It localises to the cell cortex. Its subcellular location is the cell membrane. The protein localises to the cell projection. It is found in the ruffle. Its function is as follows. Required for insulin-stimulated glucose transport and glucose transporter SLC2A4/GLUT4 translocation from intracellular glucose storage vesicle (GSV) to the plasma membrane (PM) in adipocytes. Binds phospholipid membranes in a calcium-dependent manner and is necessary for the optimal membrane fusion between SLC2A4/GLUT4 GSV and the PM. The protein is C2 domain-containing protein 5 (C2CD5) of Pongo abelii (Sumatran orangutan).